A 388-amino-acid chain; its full sequence is Glutamine transporter 2 (388 aa).

11 helical membrane-spanning segments follow: residues 5-27 (LFGS…IPMV), 31-53 (FGLF…AALL), 86-106 (LFYL…ADLI), 121-141 (FAQV…TQII), 147-167 (LLFF…IPGM), 186-206 (TSTI…LVAY), 218-238 (MVIL…YAVV), 268-288 (IILS…VAMA), 302-322 (IVTY…AADQ), 326-346 (VLGY…LAMV), and 368-388 (GGKL…ISQI).

It belongs to the amino acid/polyamine transporter 2 family.

The protein localises to the cell inner membrane. In terms of biological role, seems to be involved in glutamine transport. Complements an E.coli glnP deletion mutant. The sequence is that of Glutamine transporter 2 from Aliivibrio fischeri (strain ATCC 700601 / ES114) (Vibrio fischeri).